The primary structure comprises 185 residues: MVKLGNNFAEKGTKQPLLEDGFDTIPLMTPLDVNQLQFPPPDKVVVKTKTEYEPDRKKGKARPPKIAEFTVSITEGVTERFKVSVLVLFALAFLTCVVFLVVYKVYKYDRACPDGFVLKNTQCIPEGLESYYTEQDSSAREKFYTVINHYNVAKQSITRSVSPWMSVLSEEKLSEQETEAAEKSA.

Topologically, residues methionine 1 to lysine 82 are cytoplasmic. Residues valine 83–tyrosine 103 traverse the membrane as a helical; Signal-anchor for type II membrane protein segment. Residues lysine 104–alanine 185 lie on the Lumenal side of the membrane. The segment at glutamate 129–tryptophan 164 is required for GRIP1 interaction.

This sequence belongs to the NSG family. Forms a complex with GRIP1, GRIA2 and STX12 through direct interaction with GRIP1; controls the intracellular fate of AMPAR and the endosomal sorting of the GRIA2 subunit toward recycling and membrane targeting. Interacts with STX12. Interacts with APP; could regulate APP processing. Interacts with FAM171A1. Pituitary and less in adrenal gland and testis. Expressed in the hippocampus throughout development. At P0, highly and broadly expressed throughout the cortical plate, but is down-regulated overall at P8 and P14, but remains relatively enriched in layer V. At P0 is expressed ubiquitously in the developing cerebellum namely Purkinje neurons as well as granule neurons. However, it becomes restricted to Purkinje cells by P8. This exclusive expression in Purkinje cells is maintained throughout adulthood.

It localises to the membrane. The protein localises to the golgi apparatus. Its subcellular location is the trans-Golgi network membrane. The protein resides in the endosome membrane. It is found in the cell projection. It localises to the dendrite. The protein localises to the early endosome membrane. Its subcellular location is the late endosome membrane. The protein resides in the lysosome lumen. It is found in the recycling endosome membrane. It localises to the cytoplasmic vesicle membrane. The protein localises to the golgi stack membrane. Its subcellular location is the endosome. The protein resides in the multivesicular body membrane. It is found in the endoplasmic reticulum membrane. Plays a role in the recycling mechanism in neurons of multiple receptors, including AMPAR, APP and L1CAM and acts at the level of early endosomes to promote sorting of receptors toward a recycling pathway. Regulates sorting and recycling of GRIA2 through interaction with GRIP1 and then contributes to the regulation of synaptic transmission and plasticity by affecting the recycling and targeting of AMPA receptors to the synapse. Is required for faithful sorting of L1CAM to axons by facilitating trafficking from somatodendritic early endosome or the recycling endosome. In an other hand, induces apoptosis via the activation of CASP3 in response to DNA damage. The protein is Neuronal vesicle trafficking-associated protein 1 of Mus musculus (Mouse).